Here is a 1461-residue protein sequence, read N- to C-terminus: Pleiotropic drug resistance protein 2 (1461 aa).

An ABC transporter 1 domain is found at 172 to 445 (LGLIHLSPSK…FEYMGFRCPE (274 aa)). An ATP-binding site is contributed by 205 to 212 (GPPGSGKT). Residues 523–736 (ELFKSCFTRE…GQNAIAINEF (214 aa)) form the ABC transmembrane type-2 1 domain. The next 6 helical transmembrane spans lie at 541-561 (FLYIFKTTQITIMATIALTVF), 577-597 (FWGALFFSLINVMFNGMQELA), 622-642 (LPIWVLKIPISLVESAIWIIL), 660-680 (LLAFIGVHQMALSLFRFIAAA), 685-705 (VVANTLGTFTLLMVFILGGFI), and 771-791 (ISIGALFGFSLLFNVLFIAAL). Residues 859–1111 (LAFNHVNYYV…KLVEYFETIP (253 aa)) form the ABC transporter 2 domain. 904-911 (GVSGAGKT) contributes to the ATP binding site. In terms of domain architecture, ABC transmembrane type-2 2 spans 1184-1398 (TQCKACFWKQ…TIYGIFASQV (215 aa)). 7 helical membrane-spanning segments follow: residues 1203–1223 (YNAIRFFMTVIIGILFGVIFW), 1243–1263 (YAAVMFLGATNASAVQSVVAI), 1291–1311 (TIYVAIQTFVYSLLLFSMIGY), 1321–1341 (FYYFIFMCFTYFSMYGMMVVA), 1348–1368 (IAAIVMSFFLSFWNLFSGFLI), 1379–1399 (WYYWASPVAWTIYGIFASQVG), and 1430–1450 (FLLVVVFAHVGWVLLFFFVFA).

The protein belongs to the ABC transporter superfamily. ABCG family. PDR (TC 3.A.1.205) subfamily.

It is found in the membrane. Its function is as follows. May be a general defense protein. This Nicotiana plumbaginifolia (Leadwort-leaved tobacco) protein is Pleiotropic drug resistance protein 2 (PDR2).